We begin with the raw amino-acid sequence, 297 residues long: Homoserine kinase (297 aa).

ATP is bound at residue 84 to 94 (PPARGLGSSAT).

The protein belongs to the GHMP kinase family. Homoserine kinase subfamily.

It is found in the cytoplasm. The enzyme catalyses L-homoserine + ATP = O-phospho-L-homoserine + ADP + H(+). Its pathway is amino-acid biosynthesis; L-threonine biosynthesis; L-threonine from L-aspartate: step 4/5. In terms of biological role, catalyzes the ATP-dependent phosphorylation of L-homoserine to L-homoserine phosphate. This Aquifex aeolicus (strain VF5) protein is Homoserine kinase (thrB).